The following is a 446-amino-acid chain: Baeyer-Villiger monooxygenase dmxR6 (446 aa).

The protein belongs to the AflY oxidoreductase family.

Its pathway is secondary metabolite biosynthesis. In terms of biological role, baeyer-Villiger monooxygenase; part of the gene cluster that mediates the biosynthesis of the dimeric xanthones cryptosporioptides. The pathway begins with the synthesis of atrochrysone thioester by the polyketide synthase dmx-nrPKS. The atrochrysone carboxyl ACP thioesterase dmxR1 then breaks the thioester bond and releases the atrochrysone carboxylic acid from dmx-nrPKS. Atrochrysone carboxylic acid is decarboxylated by the decarboxylase dmxR15, and oxidized by the anthrone oxygenase dmxR16 to yield emodin. Emodin is then reduced to emodin hydroquinone by the oxidoreductase dmxR7. A-ring reduction by the short chain dehydrogenase dmxR18, dehydration by the scytalone dehydratase-like protein dmxR17 and probable spontaneous re-oxidation, results in overall deoxygenation to chrysophanol. Baeyer-Villiger oxidation by the Baeyer-Villiger monooxygenase (BVMO) dmxR6 then yields monodictylactone in equilibrium with monodictyphenone. In the case of the cryptosporioptides biosynthesis, monodictylactone is reduced at C-12 to an alcohol (by the short chain dehydrogenases dmxR12 or dmxR8) and hydroxylated at C-5 by dmxR9, yielding the electron-rich aromatic which could eliminate H(2)O to form the ortho-quinonemethide, followed by tautomerisation to paraquinone and complete the formal reduction to produce the 10-methylgroup. Conjugate addition of C-4a-OH to the resulting paraquinone by the monooxygenase dmxR10 then gives cyclohexadienone, which is then reduced at C-5 by the short chain dehydrogenase dmxR3 to give the dihydroxanthone. The 6,7-epoxide in the cryptosporioptides could be introduced by the cytochrome P450 monooxygenase dmxL3. The highly reducing PKS dmxL2 manufactures butyrate, which is further carboxylated by dmxL1 to form ethylmalonate. It is not yet clear whether the carboxylation occurs while the butyrate is attached to the ACP of dmxL2, but this unusual fungal metabolite could then be esterified to O-5 by the O-acetyltransferase dmxR13. Finally, dimerization performed by dmxR5 gives the observed dimers cryptosporioptides A, B and C as the final products of the pathway. This Cryptosporiopsis sp. (strain 8999) protein is Baeyer-Villiger monooxygenase dmxR6.